A 265-amino-acid polypeptide reads, in one-letter code: 3-methyl-2-oxobutanoate hydroxymethyltransferase (265 aa).

Mg(2+)-binding residues include Asp-45 and Asp-84. Residues 45–46 (DS), Asp-84, and Lys-112 each bind 3-methyl-2-oxobutanoate. Glu-114 is a Mg(2+) binding site. Glu-181 acts as the Proton acceptor in catalysis.

This sequence belongs to the PanB family. Homodecamer; pentamer of dimers. The cofactor is Mg(2+).

It localises to the cytoplasm. The enzyme catalyses 3-methyl-2-oxobutanoate + (6R)-5,10-methylene-5,6,7,8-tetrahydrofolate + H2O = 2-dehydropantoate + (6S)-5,6,7,8-tetrahydrofolate. It functions in the pathway cofactor biosynthesis; (R)-pantothenate biosynthesis; (R)-pantoate from 3-methyl-2-oxobutanoate: step 1/2. Functionally, catalyzes the reversible reaction in which hydroxymethyl group from 5,10-methylenetetrahydrofolate is transferred onto alpha-ketoisovalerate to form ketopantoate. This is 3-methyl-2-oxobutanoate hydroxymethyltransferase from Yersinia pestis bv. Antiqua (strain Antiqua).